A 211-amino-acid chain; its full sequence is Ion-translocating oxidoreductase complex subunit G (211 aa).

The helical transmembrane segment at 9 to 29 (GLTLAIFACATTGLVALTQYL) threads the bilayer. Thr175 carries the FMN phosphoryl threonine modification.

It belongs to the RnfG family. In terms of assembly, the complex is composed of six subunits: RnfA, RnfB, RnfC, RnfD, RnfE and RnfG. It depends on FMN as a cofactor.

It is found in the cell inner membrane. Its function is as follows. Part of a membrane-bound complex that couples electron transfer with translocation of ions across the membrane. The chain is Ion-translocating oxidoreductase complex subunit G from Vibrio parahaemolyticus serotype O3:K6 (strain RIMD 2210633).